The sequence spans 472 residues: Probable serine/threonine-protein kinase At1g01540 (472 aa).

A helical transmembrane segment spans residues 24 to 44; the sequence is LWVVIGILLGSLIVIALFLLS. 2 positions are modified to phosphothreonine: T67 and T143. The 278-residue stretch at 154–431 folds into the Protein kinase domain; sequence LCEENVIGEG…IHMLEAEDLL (278 aa). Residues 160-168 and K182 each bind ATP; that span reads IGEGGYGIV. Y227 is subject to Phosphotyrosine. The active-site Proton acceptor is the D280. S284 bears the Phosphoserine mark. A phosphothreonine mark is found at T314 and T319. A Phosphotyrosine modification is found at Y327. A compositionally biased stretch (basic and acidic residues) spans 437–449; the sequence is RTTRDHGSRERQE. The interval 437–472 is disordered; the sequence is RTTRDHGSRERQETAVVAAGSESGESGSRHHQQKQR. The segment covering 451–462 has biased composition (low complexity); the sequence is AVVAAGSESGES.

This sequence belongs to the protein kinase superfamily. Ser/Thr protein kinase family.

The protein localises to the membrane. It carries out the reaction L-seryl-[protein] + ATP = O-phospho-L-seryl-[protein] + ADP + H(+). The enzyme catalyses L-threonyl-[protein] + ATP = O-phospho-L-threonyl-[protein] + ADP + H(+). The sequence is that of Probable serine/threonine-protein kinase At1g01540 from Arabidopsis thaliana (Mouse-ear cress).